Here is a 497-residue protein sequence, read N- to C-terminus: Validamine 7-phosphate valienyltransferase (497 aa).

Residue D158 participates in GDP-valienol binding. Validamine 7-phosphate is bound at residue H182. GDP-valienol is bound by residues R290, K295, R321, 325-326 (NR), 361-362 (ND), and T366. Residue 383 to 386 (DGQN) participates in validamine 7-phosphate binding. GDP-valienol-binding positions include 387-388 (LS) and E391.

This sequence belongs to the glycosyltransferase 20 family. Homodimer.

The catalysed reaction is validamine 7-phosphate + GDP-valienol = validoxylamine A 7'-phosphate + GDP + H(+). Functionally, involved in the biosynthesis of the antifungal agent validamycin A. Catalyzes the condensation between GDP-valienol and validamine 7-phosphate via a nonglycosidic C-N bond formation to yield validoxylamine A 7'-phosphate. The sequence is that of Validamine 7-phosphate valienyltransferase from Streptomyces hygroscopicus subsp. limoneus.